Consider the following 394-residue polypeptide: Elongation factor Tu (394 aa).

A tr-type G domain is found at 10-204 (KPHVNVGTIG…AMDDYIPAPE (195 aa)). The segment at 19 to 26 (GHVDHGKT) is G1. 19 to 26 (GHVDHGKT) is a binding site for GTP. A Mg(2+)-binding site is contributed by Thr26. The tract at residues 60–64 (GITIN) is G2. The tract at residues 81–84 (DCPG) is G3. GTP contacts are provided by residues 81–85 (DCPGH) and 136–139 (NKCD). Positions 136-139 (NKCD) are G4. Residues 174–176 (SAL) form a G5 region.

This sequence belongs to the TRAFAC class translation factor GTPase superfamily. Classic translation factor GTPase family. EF-Tu/EF-1A subfamily. Monomer.

It localises to the cytoplasm. The catalysed reaction is GTP + H2O = GDP + phosphate + H(+). Its function is as follows. GTP hydrolase that promotes the GTP-dependent binding of aminoacyl-tRNA to the A-site of ribosomes during protein biosynthesis. This Francisella tularensis subsp. holarctica (strain FTNF002-00 / FTA) protein is Elongation factor Tu.